Consider the following 445-residue polypeptide: UPF0210 protein SEQ_0468 (445 aa).

It belongs to the UPF0210 family. Homodimer.

The chain is UPF0210 protein SEQ_0468 from Streptococcus equi subsp. equi (strain 4047).